A 570-amino-acid chain; its full sequence is Sulfite reductase [NADPH] hemoprotein beta-component (570 aa).

Positions 434, 440, 479, and 483 each coordinate [4Fe-4S] cluster. Position 483 (C483) interacts with siroheme.

This sequence belongs to the nitrite and sulfite reductase 4Fe-4S domain family. As to quaternary structure, alpha(8)-beta(8). The alpha component is a flavoprotein, the beta component is a hemoprotein. It depends on siroheme as a cofactor. [4Fe-4S] cluster serves as cofactor.

The catalysed reaction is hydrogen sulfide + 3 NADP(+) + 3 H2O = sulfite + 3 NADPH + 4 H(+). It participates in sulfur metabolism; hydrogen sulfide biosynthesis; hydrogen sulfide from sulfite (NADPH route): step 1/1. Functionally, component of the sulfite reductase complex that catalyzes the 6-electron reduction of sulfite to sulfide. This is one of several activities required for the biosynthesis of L-cysteine from sulfate. This Klebsiella pneumoniae subsp. pneumoniae (strain ATCC 700721 / MGH 78578) protein is Sulfite reductase [NADPH] hemoprotein beta-component.